Consider the following 207-residue polypeptide: Imidazole glycerol phosphate synthase subunit HisH (207 aa).

Residues 1–206 (MMIVIGYDAG…KEYVYENTAR (206 aa)) form the Glutamine amidotransferase type-1 domain. Cysteine 79 serves as the catalytic Nucleophile. Catalysis depends on residues histidine 181 and glutamate 183.

Heterodimer of HisH and HisF.

The protein localises to the cytoplasm. The catalysed reaction is 5-[(5-phospho-1-deoxy-D-ribulos-1-ylimino)methylamino]-1-(5-phospho-beta-D-ribosyl)imidazole-4-carboxamide + L-glutamine = D-erythro-1-(imidazol-4-yl)glycerol 3-phosphate + 5-amino-1-(5-phospho-beta-D-ribosyl)imidazole-4-carboxamide + L-glutamate + H(+). It catalyses the reaction L-glutamine + H2O = L-glutamate + NH4(+). It functions in the pathway amino-acid biosynthesis; L-histidine biosynthesis; L-histidine from 5-phospho-alpha-D-ribose 1-diphosphate: step 5/9. Its function is as follows. IGPS catalyzes the conversion of PRFAR and glutamine to IGP, AICAR and glutamate. The HisH subunit catalyzes the hydrolysis of glutamine to glutamate and ammonia as part of the synthesis of IGP and AICAR. The resulting ammonia molecule is channeled to the active site of HisF. In Streptococcus gordonii (strain Challis / ATCC 35105 / BCRC 15272 / CH1 / DL1 / V288), this protein is Imidazole glycerol phosphate synthase subunit HisH.